The following is a 92-amino-acid chain: Phenol 2-monooxygenase, auxiliary component DmpK (92 aa).

Homotrimer or homotetramer. Interacts with the phenol hydroxylase components DmpL (P1 component) and DmpN (P3 component).

Its pathway is aromatic compound metabolism; phenol degradation. Its function is as follows. DmpK is an auxiliary protein associated with the multicomponent phenol hydroxylase DmpLMNOP and it may be involved in the post-translational incorporation of iron into the oxygenase component of the phenol hydroxylase. Required for growth on phenol but not for in vitro phenol hydroxylase activity. The chain is Phenol 2-monooxygenase, auxiliary component DmpK from Pseudomonas sp. (strain CF600).